The chain runs to 931 residues: G patch domain-containing protein 1 (931 aa).

Disordered regions lie at residues 1 to 41 (MAAR…TVRD), 73 to 92 (PSTF…LGPE), and 169 to 209 (QGVG…EDDD). A2 carries the post-translational modification N-acetylalanine. Residues S6 and S8 each carry the phosphoserine modification. The region spanning 152–198 (KLSVGFELLRKMGWKEGQGVGPRVKRRPRRQKPDPGVKIYGCALPPG) is the G-patch domain. Residue K312 forms a Glycyl lysine isopeptide (Lys-Gly) (interchain with G-Cter in SUMO2) linkage. A phosphoserine mark is found at S357 and S477. 2 disordered regions span residues 568 to 595 (RFTH…GDKQ) and 659 to 931 (LPTT…LRRQ). The span at 582–593 (EVPRDQENDVGD) shows a compositional bias: basic and acidic residues. A compositionally biased stretch (polar residues) spans 659–668 (LPTTQASSEK). A compositionally biased stretch (basic and acidic residues) spans 669 to 695 (VSQHRGPDKSRKPSRWDTSKHEKKEDS). The residue at position 715 (S715) is a Phosphoserine. Positions 769–780 (SEDEQGDSEDDQ) are enriched in acidic residues. The segment covering 786–802 (ANFQSSQDTDLGETSSV) has biased composition (polar residues). Basic residues predominate over residues 852 to 888 (EKHKKNKDKHKAKKEHRRKKEKKKKHRKHKHKGKQKN). Residues 896–905 (SSESSDSSDS) show a composition bias toward low complexity. A compositionally biased stretch (basic residues) spans 922 to 931 (RLKSLPLRRQ).

The protein belongs to the GPATCH1 family.

This chain is G patch domain-containing protein 1 (GPATCH1), found in Homo sapiens (Human).